The chain runs to 635 residues: 1-deoxy-D-xylulose-5-phosphate synthase (635 aa).

Residues His-78 and 119–121 contribute to the thiamine diphosphate site; that span reads GHA. Asp-151 serves as a coordination point for Mg(2+). Thiamine diphosphate is bound by residues 152–153, Asn-180, and Tyr-291; that span reads GA. Position 180 (Asn-180) interacts with Mg(2+). Residues 305–325 form a disordered region; that stretch reads PAFEDRGGTPVTRGSDGRPPY. Glu-374 is a thiamine diphosphate binding site.

The protein belongs to the transketolase family. DXPS subfamily. In terms of assembly, homodimer. The cofactor is Mg(2+). It depends on thiamine diphosphate as a cofactor.

The catalysed reaction is D-glyceraldehyde 3-phosphate + pyruvate + H(+) = 1-deoxy-D-xylulose 5-phosphate + CO2. It participates in metabolic intermediate biosynthesis; 1-deoxy-D-xylulose 5-phosphate biosynthesis; 1-deoxy-D-xylulose 5-phosphate from D-glyceraldehyde 3-phosphate and pyruvate: step 1/1. Catalyzes the acyloin condensation reaction between C atoms 2 and 3 of pyruvate and glyceraldehyde 3-phosphate to yield 1-deoxy-D-xylulose-5-phosphate (DXP). This chain is 1-deoxy-D-xylulose-5-phosphate synthase, found in Rhodopirellula baltica (strain DSM 10527 / NCIMB 13988 / SH1).